A 115-amino-acid polypeptide reads, in one-letter code: Nitrogen regulatory protein P-II 1 (115 aa).

Tyr-54 carries the O-UMP-tyrosine modification.

Belongs to the P(II) protein family.

Its function is as follows. Could be involved in the regulation of nitrogen fixation. This is Nitrogen regulatory protein P-II 1 from Methanothermobacter thermautotrophicus (strain ATCC 29096 / DSM 1053 / JCM 10044 / NBRC 100330 / Delta H) (Methanobacterium thermoautotrophicum).